The primary structure comprises 137 residues: Large-conductance mechanosensitive channel (137 aa).

Transmembrane regions (helical) follow at residues A9 to F29 and I79 to I99.

It belongs to the MscL family. Homopentamer.

The protein localises to the cell inner membrane. Its function is as follows. Channel that opens in response to stretch forces in the membrane lipid bilayer. May participate in the regulation of osmotic pressure changes within the cell. This is Large-conductance mechanosensitive channel from Pseudomonas entomophila (strain L48).